We begin with the raw amino-acid sequence, 632 residues long: 1-deoxy-D-xylulose-5-phosphate synthase (632 aa).

Thiamine diphosphate is bound by residues histidine 72 and 113-115 (GHA). Aspartate 144 is a Mg(2+) binding site. Thiamine diphosphate-binding positions include 145-146 (GA), asparagine 174, tyrosine 285, and glutamate 368. Asparagine 174 provides a ligand contact to Mg(2+).

This sequence belongs to the transketolase family. DXPS subfamily. In terms of assembly, homodimer. Requires Mg(2+) as cofactor. Thiamine diphosphate is required as a cofactor.

It carries out the reaction D-glyceraldehyde 3-phosphate + pyruvate + H(+) = 1-deoxy-D-xylulose 5-phosphate + CO2. It functions in the pathway metabolic intermediate biosynthesis; 1-deoxy-D-xylulose 5-phosphate biosynthesis; 1-deoxy-D-xylulose 5-phosphate from D-glyceraldehyde 3-phosphate and pyruvate: step 1/1. Catalyzes the acyloin condensation reaction between C atoms 2 and 3 of pyruvate and glyceraldehyde 3-phosphate to yield 1-deoxy-D-xylulose-5-phosphate (DXP). The protein is 1-deoxy-D-xylulose-5-phosphate synthase of Cyanothece sp. (strain PCC 7425 / ATCC 29141).